The primary structure comprises 326 residues: tRNA-modifying protein YgfZ (326 aa).

Folate-binding residues include W27 and W189.

Belongs to the tRNA-modifying YgfZ family.

The protein resides in the cytoplasm. In terms of biological role, folate-binding protein involved in regulating the level of ATP-DnaA and in the modification of some tRNAs. It is probably a key factor in regulatory networks that act via tRNA modification, such as initiation of chromosomal replication. This is tRNA-modifying protein YgfZ from Escherichia coli O127:H6 (strain E2348/69 / EPEC).